Reading from the N-terminus, the 1295-residue chain is DNA (cytosine-5)-methyltransferase CMT2 (1295 aa).

3 disordered regions span residues 1–23 (MLSP…SSSR), 61–91 (RRST…GKSQ), and 249–287 (NSSK…GKGM). The span at 61 to 72 (RRSTTLNCNSPE) shows a compositional bias: polar residues. Residues 578-693 (HTFSLGDFAY…VEYSTFQTLR (116 aa)) enclose the BAH domain. One can recognise an SAM-dependent MTase C5-type domain in the interval 727 to 1268 (LPVLDLYSGC…YSLGMAFRGL (542 aa)). The segment at 814–835 (SVNSTKETSGSSSSSDDDSDSE) is disordered. Residues 837 to 902 (YEVEKLVDIC…SGFKSKILPL (66 aa)) form the Chromo domain. Cys915 is a catalytic residue.

The protein belongs to the class I-like SAM-binding methyltransferase superfamily. C5-methyltransferase family.

Its subcellular location is the nucleus. It catalyses the reaction a 2'-deoxycytidine in DNA + S-adenosyl-L-methionine = a 5-methyl-2'-deoxycytidine in DNA + S-adenosyl-L-homocysteine + H(+). Functionally, may be involved in the CpXpG methylation and in gene silencing. The chain is DNA (cytosine-5)-methyltransferase CMT2 (CMT2) from Arabidopsis thaliana (Mouse-ear cress).